Consider the following 106-residue polypeptide: Nucleoid-associated protein Nham_0463 (106 aa).

This sequence belongs to the YbaB/EbfC family. As to quaternary structure, homodimer.

It localises to the cytoplasm. Its subcellular location is the nucleoid. Its function is as follows. Binds to DNA and alters its conformation. May be involved in regulation of gene expression, nucleoid organization and DNA protection. This Nitrobacter hamburgensis (strain DSM 10229 / NCIMB 13809 / X14) protein is Nucleoid-associated protein Nham_0463.